We begin with the raw amino-acid sequence, 190 residues long: MSGLRPALSTFLFLLLITGGVYPLLTTALGQWWFPWQANGSLIREGDTVRGSALIGQNFTGNGYFHGRPSATAEMPYNPQASGGSNLAVSNPELDKQIAARVAALRAANPNASTNVPVELVTASASGLDNNITPQAAAWQIPRVAKARNLSVEQLTQLIAKYSQQPLVKYIGQPVVNIVELNLALDKLDE.

The chain crosses the membrane as a helical span at residues 10 to 30 (TFLFLLLITGGVYPLLTTALG).

It belongs to the KdpC family. In terms of assembly, the system is composed of three essential subunits: KdpA, KdpB and KdpC.

It is found in the cell inner membrane. Functionally, part of the high-affinity ATP-driven potassium transport (or Kdp) system, which catalyzes the hydrolysis of ATP coupled with the electrogenic transport of potassium into the cytoplasm. This subunit acts as a catalytic chaperone that increases the ATP-binding affinity of the ATP-hydrolyzing subunit KdpB by the formation of a transient KdpB/KdpC/ATP ternary complex. The chain is Potassium-transporting ATPase KdpC subunit from Escherichia coli O81 (strain ED1a).